The primary structure comprises 355 residues: IGF-like family receptor 1 (355 aa).

A signal peptide spans 1–22 (MGPGRCLLTALLLLALAPPPEA). Topologically, residues 23 to 163 (SQYCGRLEYW…PQQAWPNFLP (141 aa)) are extracellular. The disordered stretch occupies residues 120 to 147 (KGHCPLTPGNPGAPSSQERSSPASSIAW). A compositionally biased stretch (low complexity) spans 132–144 (APSSQERSSPASS). A helical membrane pass occupies residues 164-184 (LVVLVLLLTLAVIAILLFILL). Residues 185–355 (WHLCWPKEKA…KLGSSGVCWA (171 aa)) are Cytoplasmic-facing.

It localises to the cell membrane. Probable cell membrane receptor for the IGF-like family proteins. Binds IGFL1 and IGFL3 with a higher affinity. May also bind IGFL2. This is IGF-like family receptor 1 (IGFLR1) from Homo sapiens (Human).